The following is a 367-amino-acid chain: Glutamate 5-kinase (367 aa).

Lysine 10 is a binding site for ATP. Positions 50, 137, and 149 each coordinate substrate. ATP contacts are provided by residues 169 to 170 (TD) and 211 to 217 (TGGMSTK). The PUA domain maps to 275-353 (AGEITVDDGA…QQIAEILGYE (79 aa)).

Belongs to the glutamate 5-kinase family.

The protein localises to the cytoplasm. The catalysed reaction is L-glutamate + ATP = L-glutamyl 5-phosphate + ADP. The protein operates within amino-acid biosynthesis; L-proline biosynthesis; L-glutamate 5-semialdehyde from L-glutamate: step 1/2. In terms of biological role, catalyzes the transfer of a phosphate group to glutamate to form L-glutamate 5-phosphate. The polypeptide is Glutamate 5-kinase (Pectobacterium carotovorum subsp. carotovorum (strain PC1)).